A 133-amino-acid chain; its full sequence is Fluoride-specific ion channel FluC (133 aa).

A run of 4 helical transmembrane segments spans residues 12–32 (LAMT…ASLI), 41–61 (WGTL…LVWL), 76–96 (IVGV…CLVF), and 104–124 (MIGI…FAGA). Positions 81 and 84 each coordinate Na(+).

This sequence belongs to the fluoride channel Fluc/FEX (TC 1.A.43) family.

The protein resides in the cell inner membrane. The enzyme catalyses fluoride(in) = fluoride(out). With respect to regulation, na(+) is not transported, but it plays an essential structural role and its presence is essential for fluoride channel function. Its function is as follows. Fluoride-specific ion channel. Important for reducing fluoride concentration in the cell, thus reducing its toxicity. The sequence is that of Fluoride-specific ion channel FluC from Xanthomonas axonopodis pv. citri (strain 306).